A 593-amino-acid polypeptide reads, in one-letter code: Probable serine/threonine-protein kinase samkB (593 aa).

The region spanning Trp-29–Asn-93 is the SAM domain. Residues Glu-108 to Thr-157 form a disordered region. A compositionally biased stretch (low complexity) spans Asn-113–Asn-153. The Protein kinase domain maps to Tyr-186–Phe-438. ATP-binding positions include Ile-192–Val-200 and Lys-216. The active-site Proton acceptor is Asp-313.

Belongs to the protein kinase superfamily. Ser/Thr protein kinase family.

It carries out the reaction L-seryl-[protein] + ATP = O-phospho-L-seryl-[protein] + ADP + H(+). The enzyme catalyses L-threonyl-[protein] + ATP = O-phospho-L-threonyl-[protein] + ADP + H(+). The sequence is that of Probable serine/threonine-protein kinase samkB (samkB) from Dictyostelium discoideum (Social amoeba).